An 816-amino-acid polypeptide reads, in one-letter code: Protein hunchback (816 aa).

4 disordered regions span residues 33–92 (LSHH…QPMD), 129–151 (QQHF…GGFN), 165–185 (YYGG…PTAV), and 197–229 (ALTP…LMSN). 3 stretches are compositionally biased toward low complexity: residues 49–60 (SNSNSGASSPRQ), 79–89 (QQQQQQQQQQQ), and 129–139 (QQHFQAAQHQQ). T199 carries the phosphothreonine modification. S209, S228, S230, and S231 each carry phosphoserine. The span at 219–229 (EPEKEHDLMSN) shows a compositional bias: basic and acidic residues. 4 consecutive C2H2-type zinc fingers follow at residues 261-283 (YKCK…TRTH), 290-312 (LQCA…IRKH), 318-340 (FQCD…RKSH), and 346-364 (YRCA…FKLH). 3 disordered regions span residues 387–427 (VIDV…QQQQ), 536–612 (LQQQ…QLPH), and 679–734 (GSSA…SNPT). Composition is skewed to low complexity over residues 399–427 (SKSF…QQQQ) and 536–560 (LQQQ…QQQQ). Residues 567–578 (NEEDEEEEEHED) show a composition bias toward acidic residues. Phosphoserine is present on residues S584 and S587. Over residues 712 to 734 (SASSTASSSGNSSNASSSTSNPT) the composition is skewed to low complexity. 2 C2H2-type zinc fingers span residues 763-785 (YECK…MGYH) and 791-815 (FKCN…RNAH).

This sequence belongs to the hunchback C2H2-type zinc-finger protein family.

It is found in the nucleus. Gap class segmentation protein that controls development of head structures. In Drosophila virilis (Fruit fly), this protein is Protein hunchback.